The sequence spans 442 residues: Proline--tRNA ligase (442 aa).

The protein belongs to the class-II aminoacyl-tRNA synthetase family. ProS type 2 subfamily. As to quaternary structure, homodimer.

It is found in the cytoplasm. The catalysed reaction is tRNA(Pro) + L-proline + ATP = L-prolyl-tRNA(Pro) + AMP + diphosphate. Its function is as follows. Catalyzes the attachment of proline to tRNA(Pro) in a two-step reaction: proline is first activated by ATP to form Pro-AMP and then transferred to the acceptor end of tRNA(Pro). This is Proline--tRNA ligase from Brucella ovis (strain ATCC 25840 / 63/290 / NCTC 10512).